The primary structure comprises 481 residues: MYDAERGWSLSFAGCGFLGFYHVGATRCLSEHAPHLLRDARMLFGASAGALHCVGVLSGIPLEQTLQVLSDLVRKARSRNIGIFHPSFNLSKFLRQGLCKCLPANVHQLISGKIGISLTRVSDGENVLVSDFRSKDEVVDALVCSCFIPFYSGLIPPSFRGVRYVDGGVSDNVPFIDAKTTITVSPFYGEYDICPKVKSTNFLHVDITKLSLRLCTGNLYLLSRAFVPPDLKVLGEICLRGYLDAFRFLEEKGICNRPQPGLKSSSEGMDPEVAMPSWANMSLDSSPESAALAVRLEGDELLDHLRLSILPWDESILDTLSPRLATALSEEMKDKGGYMSKICNLLPIRIMSYVMLPCTLPVESAIAIVQRLVTWLPDMPDDVLWLQWVTSQVFTRVLMCLLPASRSQMPVSSQQASPCTPEQDWPCWTPCSPKGCPAETKAEATPRSILRSSLNFFLGNKVPAGAEGLSTFPSFSLEKSL.

Topologically, residues 1–41 are cytoplasmic; that stretch reads MYDAERGWSLSFAGCGFLGFYHVGATRCLSEHAPHLLRDAR. In terms of domain architecture, PNPLA spans 10–179; it reads LSFAGCGFLG…SDNVPFIDAK (170 aa). The GXGXXG motif lies at 14-19; it reads GCGFLG. The chain crosses the membrane as a helical; Signal-anchor for type II membrane protein span at residues 42–62; the sequence is MLFGASAGALHCVGVLSGIPL. The short motif at 45–49 is the GXSXG element; the sequence is GASAG. The active-site Nucleophile is the Ser47. Over 63–481 the chain is Lumenal; it reads EQTLQVLSDL…FPSFSLEKSL (419 aa). A glycan (N-linked (GlcNAc...) asparagine) is linked at Asn89. Catalysis depends on Asp166, which acts as the Proton acceptor. A DGA/G motif is present at residues 166 to 168; it reads DGG. The N-linked (GlcNAc...) asparagine glycan is linked to Asn280.

The protein localises to the membrane. The protein resides in the lipid droplet. The enzyme catalyses a 1-acyl-sn-glycero-3-phosphate + an acyl-CoA = a 1,2-diacyl-sn-glycero-3-phosphate + CoA. It catalyses the reaction a triacylglycerol + H2O = a diacylglycerol + a fatty acid + H(+). The catalysed reaction is a 1-acylglycerol + a 1,3-diacylglycerol = a triacylglycerol + glycerol. It carries out the reaction a 1-acylglycerol + a 1,2-diacylglycerol = a triacylglycerol + glycerol. The enzyme catalyses 2 a 1-acylglycerol = a 1,2-diacylglycerol + glycerol. It catalyses the reaction 1-(9Z-octadecenoyl)-sn-glycero-3-phosphate + (9Z)-octadecenoyl-CoA = 1,2-di-(9Z-octadecenoyl)-sn-glycero-3-phosphate + CoA. The catalysed reaction is 1-(9Z-octadecenoyl)-sn-glycero-3-phosphate + hexadecanoyl-CoA = 1-(9Z)-octadecenoyl-2-hexadecanoyl-sn-glycero-3-phosphate + CoA. It carries out the reaction 1-(9Z-octadecenoyl)-sn-glycero-3-phosphate + (9Z,12Z)-octadecadienoyl-CoA = 1-(9Z)-octadecenoyl-2-(9Z,12Z)-octadecadienoyl-sn-glycero-3-phosphate + CoA. The enzyme catalyses 1-(9Z-octadecenoyl)-sn-glycero-3-phosphate + (5Z,8Z,11Z,14Z)-eicosatetraenoyl-CoA = 1-(9Z)-octadecenoyl-2-(5Z,8Z,11Z,14Z)-eicosatetraenoyl-sn-glycero-3-phosphate + CoA. It catalyses the reaction 2 1-(9Z-octadecenoyl)-glycerol = 1,2-di-(9Z-octadecenoyl)-glycerol + glycerol. The catalysed reaction is 1-(9Z-octadecenoyl)-glycerol + 1,2-di-(9Z-octadecenoyl)-glycerol = 1,2,3-tri-(9Z-octadecenoyl)-glycerol + glycerol. It carries out the reaction 1-(9Z-octadecenoyl)-glycerol + 1,3-di-(9Z-octadecenoyl)-glycerol = 1,2,3-tri-(9Z-octadecenoyl)-glycerol + glycerol. The enzyme catalyses 1,2,3-tri-(9Z-octadecenoyl)-glycerol + H2O = 1,3-di-(9Z-octadecenoyl)-glycerol + (9Z)-octadecenoate + H(+). It catalyses the reaction a 1,2-diacyl-sn-glycero-3-phosphocholine + H2O = a 1-acyl-sn-glycero-3-phosphocholine + a fatty acid + H(+). It functions in the pathway phospholipid metabolism. It participates in glycerolipid metabolism. The triglyceride lipase activity is inhibited by BEL ((E)-6-(bromomethylene)-3-(1-naphthalenyl)-2H-tetrahydropyran-2-one), a suicide substrate inhibitor. Functionally, specifically catalyzes coenzyme A (CoA)-dependent acylation of 1-acyl-sn-glycerol 3-phosphate (2-lysophosphatidic acid/LPA) to generate phosphatidic acid (PA), an important metabolic intermediate and precursor for both triglycerides and glycerophospholipids. Does not esterify other lysophospholipids. Acyl donors are long chain (at least C16) fatty acyl-CoAs: arachidonoyl-CoA, linoleoyl-CoA, oleoyl-CoA and at a lesser extent palmitoyl-CoA. Additionally possesses low triacylglycerol lipase and CoA-independent acylglycerol transacylase activities and thus may play a role in acyl-chain remodeling of triglycerides. In vitro may express hydrolytic activity against glycerolipids triacylglycerol, diacylglycerol and monoacylglycerol, with a strong preference for oleic acid as the acyl moiety. However, the triacylglycerol hydrolase activity is controversial and may be very low. Possesses phospholipase A2 activity. In Homo sapiens (Human), this protein is 1-acylglycerol-3-phosphate O-acyltransferase PNPLA3.